The sequence spans 187 residues: Small ribosomal subunit protein uS7 (187 aa).

It belongs to the universal ribosomal protein uS7 family. As to quaternary structure, part of the 30S ribosomal subunit.

Functionally, one of the primary rRNA binding proteins, it binds directly to 16S rRNA where it nucleates assembly of the head domain of the 30S subunit. Is located at the subunit interface close to the decoding center. This is Small ribosomal subunit protein uS7 from Methanosphaera stadtmanae (strain ATCC 43021 / DSM 3091 / JCM 11832 / MCB-3).